Here is a 146-residue protein sequence, read N- to C-terminus: Transcriptional regulator MraZ (146 aa).

SpoVT-AbrB domains lie at 6-49 (TYDH…TEEE) and 78-121 (THEV…DQKS).

Belongs to the MraZ family. As to quaternary structure, forms oligomers.

Its subcellular location is the cytoplasm. It localises to the nucleoid. The sequence is that of Transcriptional regulator MraZ from Mesoplasma florum (strain ATCC 33453 / NBRC 100688 / NCTC 11704 / L1) (Acholeplasma florum).